The sequence spans 167 residues: Claudin domain-containing protein 2 (167 aa).

4 helical membrane passes run 13-32 (LLNL…NYWT), 61-81 (VSAA…GIGI), 96-116 (TIVL…VYTS), and 130-150 (YFFG…FLLA).

This sequence belongs to the PMP-22/EMP/MP20 family.

It is found in the membrane. This Mus musculus (Mouse) protein is Claudin domain-containing protein 2 (Cldnd2).